The chain runs to 567 residues: Arginine--tRNA ligase (567 aa).

The short motif at 121–131 is the 'HIGH' region element; sequence ANPNGPLHVGH.

Belongs to the class-I aminoacyl-tRNA synthetase family.

The protein resides in the cytoplasm. The catalysed reaction is tRNA(Arg) + L-arginine + ATP = L-arginyl-tRNA(Arg) + AMP + diphosphate. This chain is Arginine--tRNA ligase, found in Methanosarcina acetivorans (strain ATCC 35395 / DSM 2834 / JCM 12185 / C2A).